A 187-amino-acid polypeptide reads, in one-letter code: Large ribosomal subunit protein uL22 (187 aa).

The disordered stretch occupies residues 161-187 (APTDDAPAKKKLSKKKLARQKEKMMRE). Over residues 169-178 (KKKLSKKKLA) the composition is skewed to basic residues.

The protein belongs to the universal ribosomal protein uL22 family.

The protein is Large ribosomal subunit protein uL22 (RpL17) of Bombyx mori (Silk moth).